Reading from the N-terminus, the 177-residue chain is Large ribosomal subunit protein uL6 (177 aa).

It belongs to the universal ribosomal protein uL6 family. As to quaternary structure, part of the 50S ribosomal subunit.

This protein binds to the 23S rRNA, and is important in its secondary structure. It is located near the subunit interface in the base of the L7/L12 stalk, and near the tRNA binding site of the peptidyltransferase center. This chain is Large ribosomal subunit protein uL6, found in Micrococcus luteus (strain ATCC 4698 / DSM 20030 / JCM 1464 / CCM 169 / CCUG 5858 / IAM 1056 / NBRC 3333 / NCIMB 9278 / NCTC 2665 / VKM Ac-2230) (Micrococcus lysodeikticus).